A 44-amino-acid polypeptide reads, in one-letter code: Alpha-amylase inhibitor magnificamide (44 aa).

Disulfide bonds link Cys-6/Cys-38, Cys-16/Cys-33, and Cys-20/Cys-39. The interval 7 to 10 is inhibitory motif; the sequence is YIYH.

The protein belongs to the sea anemone alpha-amylase inhibitor family.

Its subcellular location is the secreted. In terms of biological role, mammalian alpha-amylase (AMY2A) inhibitor. The recombinant peptide inhibits porcine pancreatic (Ki=0.17 nM) and human saliva alpha-amylases (Ki=7.7 nM). It does not show antimicrobial (tested on fungi and bacteria) or channel modulating activities (tested on 18 voltage-gated sodium and potassium channles). This is Alpha-amylase inhibitor magnificamide from Heteractis magnifica (Magnificent sea anemone).